Here is a 70-residue protein sequence, read N- to C-terminus: DNA-binding transcriptional activator AlpA (70 aa).

Positions 12-31 (LPAVIQKTGMARATIYDWLN) form a DNA-binding region, H-T-H motif.

In terms of biological role, positive regulator of the expression of the slpA gene. When overexpressed, leads to suppression of the capsule overproduction and UV sensitivity phenotypes of cells mutant for the Lon ATP-dependent protease. Part of the cryptic P4-like prophage CP4-57. Overexpression of AlpA leads to excision of the CP4-57 prophage by IntA. This inactivates ssrA (the gene upstream of the prophage) that encodes tmRNA which is required to rescue stalled ribosomes in a process known as trans-translation. This is DNA-binding transcriptional activator AlpA from Escherichia coli (strain K12).